A 426-amino-acid chain; its full sequence is Putative competence-damage inducible protein (426 aa).

The protein belongs to the CinA family.

The chain is Putative competence-damage inducible protein from Symbiobacterium thermophilum (strain DSM 24528 / JCM 14929 / IAM 14863 / T).